Here is a 328-residue protein sequence, read N- to C-terminus: Tyrosine recombinase XerC (328 aa).

Residues 13–100 (QAPHPQIAAY…AWRGWFKWMA (88 aa)) enclose the Core-binding (CB) domain. Residues 122 to 319 (RLPKALSVEQ…DFQHLAKIYD (198 aa)) form the Tyr recombinase domain. Active-site residues include arginine 162, lysine 197, histidine 271, arginine 274, and histidine 297. The active-site O-(3'-phospho-DNA)-tyrosine intermediate is tyrosine 306.

It belongs to the 'phage' integrase family. XerC subfamily. As to quaternary structure, forms a cyclic heterotetrameric complex composed of two molecules of XerC and two molecules of XerD.

The protein localises to the cytoplasm. Its function is as follows. Site-specific tyrosine recombinase, which acts by catalyzing the cutting and rejoining of the recombining DNA molecules. The XerC-XerD complex is essential to convert dimers of the bacterial chromosome into monomers to permit their segregation at cell division. It also contributes to the segregational stability of plasmids. This chain is Tyrosine recombinase XerC, found in Ralstonia pickettii (strain 12J).